A 221-amino-acid polypeptide reads, in one-letter code: Lipoprotein-releasing system ATP-binding protein LolD (221 aa).

The ABC transporter domain maps to 6-220 (LILKKISKHY…YNLKNGLLNI (215 aa)). ATP is bound at residue 42–49 (GSSGSGKS).

It belongs to the ABC transporter superfamily. Lipoprotein translocase (TC 3.A.1.125) family. As to quaternary structure, the complex is composed of two ATP-binding proteins (LolD) and two transmembrane proteins (LolC and LolE).

It is found in the cell inner membrane. Part of the ABC transporter complex LolCDE involved in the translocation of mature outer membrane-directed lipoproteins, from the inner membrane to the periplasmic chaperone, LolA. Responsible for the formation of the LolA-lipoprotein complex in an ATP-dependent manner. In Rickettsia typhi (strain ATCC VR-144 / Wilmington), this protein is Lipoprotein-releasing system ATP-binding protein LolD.